Consider the following 430-residue polypeptide: CinA-like protein (430 aa).

The protein belongs to the CinA family.

This chain is CinA-like protein, found in Prochlorococcus marinus (strain NATL2A).